The following is a 212-amino-acid chain: MSTRIVVTGTDTGIGKTVFSAALAGALDGFYWKPIQAGLDDETDTQTVLRLSGLAAERVLPEAYRLRTPASPHLAAELDGVTIEHQALLVPEKDRPLVVEGAGGLLVPLTRTITYLDLMARWRIPVVLCARTALGTINHSLLSVEALRARGVAMLGIAFIGEENVESERIITEMGKVRRLGRLPHVAPLTRDTLREAFADGFAIDDFLKGPA.

13–18 (GIGKTV) lines the ATP pocket. Mg(2+) is bound at residue Thr17. Lys33 is an active-site residue. Glu100 lines the Mg(2+) pocket. ATP is bound by residues 100–103 (EGAG) and 184–186 (PHV).

Belongs to the dethiobiotin synthetase family. As to quaternary structure, homodimer. Mg(2+) is required as a cofactor.

The protein resides in the cytoplasm. The catalysed reaction is (7R,8S)-7,8-diammoniononanoate + CO2 + ATP = (4R,5S)-dethiobiotin + ADP + phosphate + 3 H(+). It participates in cofactor biosynthesis; biotin biosynthesis; biotin from 7,8-diaminononanoate: step 1/2. Functionally, catalyzes a mechanistically unusual reaction, the ATP-dependent insertion of CO2 between the N7 and N8 nitrogen atoms of 7,8-diaminopelargonic acid (DAPA, also called 7,8-diammoniononanoate) to form a ureido ring. The polypeptide is ATP-dependent dethiobiotin synthetase BioD (Nitrobacter hamburgensis (strain DSM 10229 / NCIMB 13809 / X14)).